The following is a 332-amino-acid chain: Ferredoxin--NADP reductase (332 aa).

6 residues coordinate FAD: Glu-36, Gln-44, Tyr-49, Val-91, Phe-124, and Thr-327.

The protein belongs to the ferredoxin--NADP reductase type 2 family. In terms of assembly, homodimer. Requires FAD as cofactor.

The catalysed reaction is 2 reduced [2Fe-2S]-[ferredoxin] + NADP(+) + H(+) = 2 oxidized [2Fe-2S]-[ferredoxin] + NADPH. This Streptococcus thermophilus (strain CNRZ 1066) protein is Ferredoxin--NADP reductase.